Reading from the N-terminus, the 286-residue chain is Small ribosomal subunit protein uS2 (286 aa).

A disordered region spans residues 231 to 286 (ERAQAEAKAAAGDNDAPVSSEGESTEVASDAASTASETTATSSDESAAESSEAESK). Positions 255-280 (TEVASDAASTASETTATSSDESAAES) are enriched in low complexity.

The protein belongs to the universal ribosomal protein uS2 family.

The protein is Small ribosomal subunit protein uS2 of Corynebacterium kroppenstedtii (strain DSM 44385 / JCM 11950 / CIP 105744 / CCUG 35717).